The following is a 220-amino-acid chain: Thiamine-phosphate synthase (220 aa).

Residues 39–43 and Asn-80 contribute to the 4-amino-2-methyl-5-(diphosphooxymethyl)pyrimidine site; that span reads QLRDK. Residues Asp-81 and Asp-100 each coordinate Mg(2+). 4-amino-2-methyl-5-(diphosphooxymethyl)pyrimidine is bound at residue Ser-119. 145 to 147 provides a ligand contact to 2-[(2R,5Z)-2-carboxy-4-methylthiazol-5(2H)-ylidene]ethyl phosphate; the sequence is TPT. Lys-148 contacts 4-amino-2-methyl-5-(diphosphooxymethyl)pyrimidine. Gly-176 is a 2-[(2R,5Z)-2-carboxy-4-methylthiazol-5(2H)-ylidene]ethyl phosphate binding site.

Belongs to the thiamine-phosphate synthase family. Mg(2+) serves as cofactor.

The enzyme catalyses 2-[(2R,5Z)-2-carboxy-4-methylthiazol-5(2H)-ylidene]ethyl phosphate + 4-amino-2-methyl-5-(diphosphooxymethyl)pyrimidine + 2 H(+) = thiamine phosphate + CO2 + diphosphate. The catalysed reaction is 2-(2-carboxy-4-methylthiazol-5-yl)ethyl phosphate + 4-amino-2-methyl-5-(diphosphooxymethyl)pyrimidine + 2 H(+) = thiamine phosphate + CO2 + diphosphate. It carries out the reaction 4-methyl-5-(2-phosphooxyethyl)-thiazole + 4-amino-2-methyl-5-(diphosphooxymethyl)pyrimidine + H(+) = thiamine phosphate + diphosphate. It functions in the pathway cofactor biosynthesis; thiamine diphosphate biosynthesis; thiamine phosphate from 4-amino-2-methyl-5-diphosphomethylpyrimidine and 4-methyl-5-(2-phosphoethyl)-thiazole: step 1/1. Condenses 4-methyl-5-(beta-hydroxyethyl)thiazole monophosphate (THZ-P) and 2-methyl-4-amino-5-hydroxymethyl pyrimidine pyrophosphate (HMP-PP) to form thiamine monophosphate (TMP). This chain is Thiamine-phosphate synthase, found in Mycobacterium ulcerans (strain Agy99).